Consider the following 223-residue polypeptide: Small ribosomal subunit protein uS3 (223 aa).

The region spanning 39-117 is the KH type-2 domain; it reads IREHLRKKPS…RPELNAKLVA (79 aa).

The protein belongs to the universal ribosomal protein uS3 family. As to quaternary structure, part of the 30S ribosomal subunit. Forms a tight complex with proteins S10 and S14.

Binds the lower part of the 30S subunit head. Binds mRNA in the 70S ribosome, positioning it for translation. The protein is Small ribosomal subunit protein uS3 of Chlamydia felis (strain Fe/C-56) (Chlamydophila felis).